We begin with the raw amino-acid sequence, 366 residues long: Erythronate-4-phosphate dehydrogenase (366 aa).

Positions 46 and 67 each coordinate substrate. Residues Asp-147 and Thr-175 each contribute to the NAD(+) site. Arg-208 is an active-site residue. NAD(+) is bound at residue Asp-228. The active site involves Glu-233. His-250 (proton donor) is an active-site residue. Gly-253 is a binding site for NAD(+). Residue Tyr-254 participates in substrate binding.

It belongs to the D-isomer specific 2-hydroxyacid dehydrogenase family. PdxB subfamily. In terms of assembly, homodimer.

The protein resides in the cytoplasm. The enzyme catalyses 4-phospho-D-erythronate + NAD(+) = (R)-3-hydroxy-2-oxo-4-phosphooxybutanoate + NADH + H(+). The protein operates within cofactor biosynthesis; pyridoxine 5'-phosphate biosynthesis; pyridoxine 5'-phosphate from D-erythrose 4-phosphate: step 2/5. Functionally, catalyzes the oxidation of erythronate-4-phosphate to 3-hydroxy-2-oxo-4-phosphonooxybutanoate. The sequence is that of Erythronate-4-phosphate dehydrogenase from Coxiella burnetii (strain Dugway 5J108-111).